We begin with the raw amino-acid sequence, 476 residues long: Glycogen synthase (476 aa).

Lysine 15 provides a ligand contact to ADP-alpha-D-glucose.

This sequence belongs to the glycosyltransferase 1 family. Bacterial/plant glycogen synthase subfamily.

The enzyme catalyses [(1-&gt;4)-alpha-D-glucosyl](n) + ADP-alpha-D-glucose = [(1-&gt;4)-alpha-D-glucosyl](n+1) + ADP + H(+). It participates in glycan biosynthesis; glycogen biosynthesis. Its function is as follows. Synthesizes alpha-1,4-glucan chains using ADP-glucose. The chain is Glycogen synthase from Streptococcus gordonii (strain Challis / ATCC 35105 / BCRC 15272 / CH1 / DL1 / V288).